We begin with the raw amino-acid sequence, 426 residues long: DNA primase DnaG (426 aa).

The region spanning 165–241 (DEIIIVEGRA…DIDYVAKAPP (77 aa)) is the Toprim domain. The Mg(2+) site is built by E171, D215, and D217. A disordered region spans residues 278-298 (PAVEERPQPPQPQPPAVQPVQ). Positions 285–294 (QPPQPQPPAV) are enriched in pro residues.

Belongs to the archaeal DnaG primase family. As to quaternary structure, forms a ternary complex with MCM helicase and DNA. Component of the archaeal exosome complex. The cofactor is Mg(2+).

The enzyme catalyses ssDNA + n NTP = ssDNA/pppN(pN)n-1 hybrid + (n-1) diphosphate.. RNA polymerase that catalyzes the synthesis of short RNA molecules used as primers for DNA polymerase during DNA replication. Also part of the exosome, which is a complex involved in RNA degradation. Acts as a poly(A)-binding protein that enhances the interaction between heteromeric, adenine-rich transcripts and the exosome. This chain is DNA primase DnaG, found in Hyperthermus butylicus (strain DSM 5456 / JCM 9403 / PLM1-5).